The following is a 139-amino-acid chain: Small ribosomal subunit protein uS12 (139 aa).

Belongs to the universal ribosomal protein uS12 family. In terms of assembly, part of the 30S ribosomal subunit. Contacts proteins S8 and S17. May interact with IF1 in the 30S initiation complex.

Its function is as follows. With S4 and S5 plays an important role in translational accuracy. In terms of biological role, interacts with and stabilizes bases of the 16S rRNA that are involved in tRNA selection in the A site and with the mRNA backbone. Located at the interface of the 30S and 50S subunits, it traverses the body of the 30S subunit contacting proteins on the other side and probably holding the rRNA structure together. The combined cluster of proteins S8, S12 and S17 appears to hold together the shoulder and platform of the 30S subunit. The chain is Small ribosomal subunit protein uS12 from Mycoplasma pneumoniae (strain ATCC 29342 / M129 / Subtype 1) (Mycoplasmoides pneumoniae).